Here is a 310-residue protein sequence, read N- to C-terminus: MNKANLLHIDTNIKITLLAEVSVGISANSILFIAYLCMLLGENRHKPIDLYIAFLSLTQLMLLITMGLIAVDMFMPWGRWDSTTCQSLIYLHRFLRGLTLCATCLLNVLWTITLSSRNSCLAKFKHKYPHHISGAFLFLCVLYMSFSSHFLVSMTVTPNLTSENFMYVTQSCSLLPMSYSRTSMFSTPVAIRETFLISLMALSSGYMVALLWRHKKQAQHLRSTSLSSKASPEQRATRTILLLMSFFVVFYILDTVIFHSRMKFKDGSILYCFQIIVSHSYVTVSPFVFICTEKHIIKFLRSMCGRIANI.

Over 1-20 (MNKANLLHIDTNIKITLLAE) the chain is Extracellular. The helical transmembrane segment at 21–41 (VSVGISANSILFIAYLCMLLG) threads the bilayer. Residues 42-50 (ENRHKPIDL) are Cytoplasmic-facing. A helical membrane pass occupies residues 51–71 (YIAFLSLTQLMLLITMGLIAV). At 72–93 (DMFMPWGRWDSTTCQSLIYLHR) the chain is on the extracellular side. Cysteines 85 and 172 form a disulfide. A helical transmembrane segment spans residues 94–114 (FLRGLTLCATCLLNVLWTITL). Residues 115 to 131 (SSRNSCLAKFKHKYPHH) lie on the Cytoplasmic side of the membrane. The helical transmembrane segment at 132–152 (ISGAFLFLCVLYMSFSSHFLV) threads the bilayer. The Extracellular segment spans residues 153 to 190 (SMTVTPNLTSENFMYVTQSCSLLPMSYSRTSMFSTPVA). A glycan (N-linked (GlcNAc...) asparagine) is linked at N159. A helical transmembrane segment spans residues 191 to 211 (IRETFLISLMALSSGYMVALL). At 212–238 (WRHKKQAQHLRSTSLSSKASPEQRATR) the chain is on the cytoplasmic side. A helical transmembrane segment spans residues 239 to 259 (TILLLMSFFVVFYILDTVIFH). Residues 260 to 268 (SRMKFKDGS) lie on the Extracellular side of the membrane. Residues 269-289 (ILYCFQIIVSHSYVTVSPFVF) traverse the membrane as a helical segment. Over 290–310 (ICTEKHIIKFLRSMCGRIANI) the chain is Cytoplasmic.

Belongs to the G-protein coupled receptor 1 family.

Its subcellular location is the cell membrane. Putative pheromone receptor implicated in the regulation of social and reproductive behavior. In Mus musculus (Mouse), this protein is Vomeronasal type-1 receptor 44 (Vmn1r44).